The primary structure comprises 111 residues: MGNKRIKAMMILVVMIMMVFSWRICEADSLRRYSSSSRPQRFFKVRRPNPRNHHHQNQGFNGDDYPPESFSGFLPKTLPIPHSAPSRKHNVYGLQRTNSRSSYFWTHAHLS.

The first 27 residues, 1-27 (MGNKRIKAMMILVVMIMMVFSWRICEA), serve as a signal peptide directing secretion. A compositionally biased stretch (basic residues) spans 46–56 (RRPNPRNHHHQ). The interval 46–65 (RRPNPRNHHHQNQGFNGDDY) is disordered.

Expressed mainly in flowers. Lower levels in buds and seedlings. Detected in vascular tissues and in hydathodes.

It is found in the secreted. It localises to the extracellular space. In terms of biological role, may be involved in floral abscission. The protein is Protein IDA-LIKE 5 (IDL5) of Arabidopsis thaliana (Mouse-ear cress).